Reading from the N-terminus, the 350-residue chain is E3 ubiquitin-protein ligase TRIM63 (350 aa).

The RING-type zinc-finger motif lies at 23-79; sequence CPICLEMFTKPVVILPCQHNLCRKCANDIFQAANPYWTNRGGSVSMSGGRFRCPSCR. An interaction with TTN region spans residues 74 to 218; that stretch reads RCPSCRHEVI…LSQKFDTLYA (145 aa). The segment at 117-159 adopts a B box-type zinc-finger fold; the sequence is GSHPMCKEHEDEKINIYCLTCEVPTCSLCKVFGAHQACEVAPL. Positions 122, 125, 145, and 151 each coordinate Zn(2+). The stretch at 207-269 forms a coiled coil; the sequence is EELSQKFDTL…VETAIQSLDE (63 aa). Residues 267-325 enclose the COS domain; that stretch reads LDEPGGATFLSSAKQLIKSNVEASKGCQLGKTEQGFENMDYFTLDLEHIAEALRAIDFG. The span at 325-344 shows a compositional bias: acidic residues; that stretch reads GTDEEEEEFTEEEADEEEGV. The tract at residues 325 to 350 is disordered; that stretch reads GTDEEEEEFTEEEADEEEGVTTEGHQ.

In terms of assembly, homodimer. Homooligomer and heterooligomer. Interacts with SUMO2, titin/TTN and GMEB1. Interacts with TRIM54 and probably with TRIM55. Interacts with TNNI3. Forms a ternary complex with RACK1 and PRKCE. Interacts with CKM.

Its subcellular location is the cytoplasm. The protein localises to the nucleus. It localises to the myofibril. It is found in the sarcomere. The protein resides in the m line. Its subcellular location is the z line. The catalysed reaction is S-ubiquitinyl-[E2 ubiquitin-conjugating enzyme]-L-cysteine + [acceptor protein]-L-lysine = [E2 ubiquitin-conjugating enzyme]-L-cysteine + N(6)-ubiquitinyl-[acceptor protein]-L-lysine.. The protein operates within protein modification; protein ubiquitination. Functionally, E3 ubiquitin ligase. Mediates the ubiquitination and subsequent proteasomal degradation of CKM, GMEB1 and HIBADH. Regulates the proteasomal degradation of muscle proteins under amino acid starvation, where muscle protein is catabolized to provide other organs with amino acids. Inhibits de novo skeletal muscle protein synthesis under amino acid starvation. Regulates proteasomal degradation of cardiac troponin I/TNNI3 and probably of other sarcomeric-associated proteins. May play a role in striated muscle atrophy and hypertrophy by regulating an anti-hypertrophic PKC-mediated signaling pathway. May regulate the organization of myofibrils through TTN in muscle cells. This chain is E3 ubiquitin-protein ligase TRIM63 (Trim63), found in Mus musculus (Mouse).